The following is a 120-amino-acid chain: HTH-type transcriptional regulator NmtR (120 aa).

An HTH arsR-type domain is found at 15–109 (LDSQAAAQVA…EAIYHSEHLH (95 aa)). Residues 49–72 (VTDLAEAIGMEQSAVSHQLRVLRN) constitute a DNA-binding region (H-T-H motif). The Ni(2+) site is built by Asp91, His93, His104, and His107.

Homodimer.

Its activity is regulated as follows. Binding to DNA is inhibited by nickel and, to some extent, cobalt ions. Represses transcription of ctpJ/nmtA, by binding to its promoter region. This chain is HTH-type transcriptional regulator NmtR (nmtR), found in Mycobacterium tuberculosis (strain ATCC 25618 / H37Rv).